Consider the following 738-residue polypeptide: Propionyl-CoA carboxylase alpha chain, mitochondrial (738 aa).

Residues 62 to 509 form the Biotin carboxylation domain; the sequence is KFDKILIANR…TTKYLPEVYP (448 aa). ATP is bound by residues Lys-177, 209–270, Glu-261, and Asn-296; that span reads SREI…PRHI. The 198-residue stretch at 181-378 folds into the ATP-grasp domain; the sequence is KKIATAARVS…IVQQMLRVAY (198 aa). Glu-336, Glu-349, and Asn-351 together coordinate Mg(2+). Glu-336, Glu-349, and Asn-351 together coordinate Mn(2+). The active site involves Arg-353. Phe-409 contributes to the biotin binding site. One can recognise a Biotinyl-binding domain in the interval 663–738; sequence KAKVDLSTVV…DEGEVLVELE (76 aa). Lys-704 carries the N6-biotinyllysine modification.

In terms of assembly, the holoenzyme is a dodecamer composed of 6 alpha subunits and 6 beta subunits. Interacts with sir-2.2. Biotin is required as a cofactor. Mg(2+) serves as cofactor. It depends on Mn(2+) as a cofactor. In terms of processing, the biotin cofactor is covalently attached to the C-terminal biotinyl-binding domain and is required for the catalytic activity.

It is found in the mitochondrion matrix. The catalysed reaction is propanoyl-CoA + hydrogencarbonate + ATP = (S)-methylmalonyl-CoA + ADP + phosphate + H(+). It carries out the reaction butanoyl-CoA + hydrogencarbonate + ATP = (2S)-ethylmalonyl-CoA + ADP + phosphate + H(+). The protein operates within metabolic intermediate metabolism; propanoyl-CoA degradation; succinyl-CoA from propanoyl-CoA: step 1/3. Its function is as follows. This is one of the 2 subunits of the biotin-dependent propionyl-CoA carboxylase (PCC), a mitochondrial enzyme involved in the catabolism of odd chain fatty acids, branched-chain amino acids isoleucine, threonine, methionine, and valine and other metabolites. Propionyl-CoA carboxylase catalyzes the carboxylation of propionyl-CoA/propanoyl-CoA to D-methylmalonyl-CoA/(S)-methylmalonyl-CoA. Within the holoenzyme, the alpha subunit catalyzes the ATP-dependent carboxylation of the biotin carried by the biotin carboxyl carrier (BCC) domain, while the beta subunit then transfers the carboxyl group from carboxylated biotin to propionyl-CoA. Propionyl-CoA carboxylase also significantly acts on butyryl-CoA/butanoyl-CoA, which is converted to ethylmalonyl-CoA/(2S)-ethylmalonyl-CoA. Other alternative minor substrates include (2E)-butenoyl-CoA/crotonoyl-CoA. This chain is Propionyl-CoA carboxylase alpha chain, mitochondrial (pcca-1), found in Caenorhabditis briggsae.